Reading from the N-terminus, the 282-residue chain is Pantothenate synthetase (282 aa).

Position 30-37 (30-37) interacts with ATP; the sequence is MGYLHEGH. His-37 serves as the catalytic Proton donor. Gln-61 is a (R)-pantoate binding site. Residue Gln-61 coordinates beta-alanine. 147–150 contacts ATP; sequence GMKD. Gln-153 serves as a coordination point for (R)-pantoate. ATP contacts are provided by residues Val-176 and 184-187; that span reads KSSR.

This sequence belongs to the pantothenate synthetase family. In terms of assembly, homodimer.

Its subcellular location is the cytoplasm. The enzyme catalyses (R)-pantoate + beta-alanine + ATP = (R)-pantothenate + AMP + diphosphate + H(+). The protein operates within cofactor biosynthesis; (R)-pantothenate biosynthesis; (R)-pantothenate from (R)-pantoate and beta-alanine: step 1/1. In terms of biological role, catalyzes the condensation of pantoate with beta-alanine in an ATP-dependent reaction via a pantoyl-adenylate intermediate. This chain is Pantothenate synthetase, found in Bacillus cytotoxicus (strain DSM 22905 / CIP 110041 / 391-98 / NVH 391-98).